The sequence spans 417 residues: MLPNTGKLAGCTLFITGASRGIGKAIALKAARDGANVVIAAKTAEAHPKLPGTIYTAASEIEAAGGKALPCIVDVRDENQISAAVEKAVDTFGGIDILVNNASAISLTNTLETPMKKVDLMMGINTRGTYLTSKICIPYLKKSKVAHILNLSPPLNLNPIWFKNHCAYTIAKYGMSMCALGMSEEYKGEIAVNALWPKTAIHTAAMDMLGGSGVDKQCRTPDIMADAAYAILSKPKDFTGNFVIDEELLKHEGIKDLDVYAVSPGHPLLPDFFLDESPEALASAMEEHGATAAFKAGKAQAKSQDSSPLQETFKAIESLVNEEAVKTTQGIYQFVLSGEESGNWFLDLKNGKGGVGSGEPSTKADVVMSMDSGDFIKMFTGKMKPTMAFMSGKLKIKGDMGLALKLEKILGQMNAKL.

NADP(+) is bound by residues 17–23, Lys42, and Asp74; that span reads GASRGIG. The Proton acceptor role is filled by Tyr168. Lys172 is an NADP(+) binding site. Residues 306–414 enclose the SCP2 domain; sequence SSPLQETFKA…KLEKILGQMN (109 aa).

This sequence belongs to the short-chain dehydrogenases/reductases (SDR) family.

Its subcellular location is the peroxisome. It localises to the mitochondrion. Functionally, has apparently no steroid dehydrogenase activity. Might act as a metabolic regulator that affects systemic adaptation to nutritional cues. The protein is Hydroxysteroid dehydrogenase-like protein 2 (hsdl2) of Xenopus tropicalis (Western clawed frog).